A 474-amino-acid polypeptide reads, in one-letter code: 2-succinylbenzoate--CoA ligase (474 aa).

Belongs to the ATP-dependent AMP-binding enzyme family. MenE subfamily.

The enzyme catalyses 2-succinylbenzoate + ATP + CoA = 2-succinylbenzoyl-CoA + AMP + diphosphate. It participates in quinol/quinone metabolism; 1,4-dihydroxy-2-naphthoate biosynthesis; 1,4-dihydroxy-2-naphthoate from chorismate: step 5/7. Its pathway is quinol/quinone metabolism; menaquinone biosynthesis. Its function is as follows. Converts 2-succinylbenzoate (OSB) to 2-succinylbenzoyl-CoA (OSB-CoA). The sequence is that of 2-succinylbenzoate--CoA ligase from Staphylococcus epidermidis (strain ATCC 35984 / DSM 28319 / BCRC 17069 / CCUG 31568 / BM 3577 / RP62A).